Consider the following 181-residue polypeptide: Sodium/potassium-transporting ATPase subunit beta-1-interacting protein 3 (181 aa).

4 consecutive transmembrane segments (helical) span residues 5-22, 35-55, 62-82, and 151-171; these read TGRCTLIFICTLQMLVAL, APILGNFLHIIVVILGLFGTI, IVAYTIWTAFWVAWNVFIICF, and AVQILLSLIGFVYACYVISVI.

This sequence belongs to the NKAIN family. In terms of assembly, interacts with atp1b1 C-terminus.

It is found in the cell membrane. This is Sodium/potassium-transporting ATPase subunit beta-1-interacting protein 3 (nkain3) from Xenopus tropicalis (Western clawed frog).